The following is a 281-amino-acid chain: NH(3)-dependent NAD(+) synthetase (281 aa).

24–31 (GVSGGVDS) is an ATP binding site. Asp-30 provides a ligand contact to Mg(2+). Deamido-NAD(+) is bound at residue Arg-145. Thr-165 provides a ligand contact to ATP. A Mg(2+)-binding site is contributed by Glu-170. Residues Lys-178 and Asp-185 each coordinate deamido-NAD(+). Residues Lys-194 and Ser-216 each coordinate ATP.

This sequence belongs to the NAD synthetase family. Homodimer.

The catalysed reaction is deamido-NAD(+) + NH4(+) + ATP = AMP + diphosphate + NAD(+) + H(+). Its pathway is cofactor biosynthesis; NAD(+) biosynthesis; NAD(+) from deamido-NAD(+) (ammonia route): step 1/1. In terms of biological role, catalyzes the ATP-dependent amidation of deamido-NAD to form NAD. Uses ammonia as a nitrogen source. This is NH(3)-dependent NAD(+) synthetase (nadE1) from Thermotoga maritima (strain ATCC 43589 / DSM 3109 / JCM 10099 / NBRC 100826 / MSB8).